The sequence spans 266 residues: Syntaxin-71 (266 aa).

The Cytoplasmic portion of the chain corresponds to 1 to 243; the sequence is MTVIDILTRV…TVNQLRSSRN (243 aa). Serine 12 bears the Phosphoserine mark. The stretch at 44 to 87 forms a coiled coil; the sequence is ETQIETALEKAELVTKEKNRAAAVAMNAEIRRTKARLSEEVPKL. A disordered region spans residues 122–146; the sequence is DGTAGGPKSTSAWTPSSTTSRPDIK. The segment covering 130–141 has biased composition (low complexity); that stretch reads STSAWTPSSTTS. Residues 172-234 enclose the t-SNARE coiled-coil homology domain; it reads EMRKIKQEQG…KNTNVRLKDT (63 aa). Residues 244 to 264 form a helical; Anchor for type IV membrane protein membrane-spanning segment; sequence FCIDIVLLCIVLGIAAYLYNV. At 265-266 the chain is on the vesicular side; sequence LK.

This sequence belongs to the syntaxin family. Part of the t-SNARE complex. As to expression, expressed in root, leaf, stem, flower and silique.

Its subcellular location is the membrane. Vesicle trafficking protein that functions in the secretory pathway. The polypeptide is Syntaxin-71 (SYP71) (Arabidopsis thaliana (Mouse-ear cress)).